A 271-amino-acid polypeptide reads, in one-letter code: Pyrroline-5-carboxylate reductase (271 aa).

Belongs to the pyrroline-5-carboxylate reductase family.

It is found in the cytoplasm. The catalysed reaction is L-proline + NADP(+) = (S)-1-pyrroline-5-carboxylate + NADPH + 2 H(+). It catalyses the reaction L-proline + NAD(+) = (S)-1-pyrroline-5-carboxylate + NADH + 2 H(+). Its pathway is amino-acid biosynthesis; L-proline biosynthesis; L-proline from L-glutamate 5-semialdehyde: step 1/1. In terms of biological role, catalyzes the reduction of 1-pyrroline-5-carboxylate (PCA) to L-proline. This chain is Pyrroline-5-carboxylate reductase, found in Staphylococcus haemolyticus (strain JCSC1435).